A 274-amino-acid chain; its full sequence is Cytochrome c oxidase subunit 3 (274 aa).

7 consecutive transmembrane segments (helical) span residues 22 to 42 (PSPW…GGVM), 47 to 67 (FAAG…SMLL), 93 to 113 (GVVL…WAFF), 137 to 157 (PFEV…TITV), 170 to 190 (TILY…LQWV), 208 to 228 (FFVA…FLTV), and 248 to 268 (AAIW…VSVY).

The protein belongs to the cytochrome c oxidase subunit 3 family. As to quaternary structure, component of the cytochrome c oxidase (complex IV, CIV), a multisubunit enzyme composed of a catalytic core of 3 subunits and several supernumerary subunits. The complex exists as a monomer or a dimer and forms supercomplexes (SCs) in the inner mitochondrial membrane with ubiquinol-cytochrome c oxidoreductase (cytochrome b-c1 complex, complex III, CIII).

It is found in the mitochondrion inner membrane. The catalysed reaction is 4 Fe(II)-[cytochrome c] + O2 + 8 H(+)(in) = 4 Fe(III)-[cytochrome c] + 2 H2O + 4 H(+)(out). Its function is as follows. Component of the cytochrome c oxidase, the last enzyme in the mitochondrial electron transport chain which drives oxidative phosphorylation. The respiratory chain contains 3 multisubunit complexes succinate dehydrogenase (complex II, CII), ubiquinol-cytochrome c oxidoreductase (cytochrome b-c1 complex, complex III, CIII) and cytochrome c oxidase (complex IV, CIV), that cooperate to transfer electrons derived from NADH and succinate to molecular oxygen, creating an electrochemical gradient over the inner membrane that drives transmembrane transport and the ATP synthase. Cytochrome c oxidase is the component of the respiratory chain that catalyzes the reduction of oxygen to water. Electrons originating from reduced cytochrome c in the intermembrane space (IMS) are transferred via the dinuclear copper A center (CU(A)) of subunit 2 and heme A of subunit 1 to the active site in subunit 1, a binuclear center (BNC) formed by heme A3 and copper B (CU(B)). The BNC reduces molecular oxygen to 2 water molecules using 4 electrons from cytochrome c in the IMS and 4 protons from the mitochondrial matrix. The sequence is that of Cytochrome c oxidase subunit 3 (COX3) from Allomyces macrogynus.